Consider the following 795-residue polypeptide: Glutamine--tRNA ligase, cytoplasmic (795 aa).

The tract at residues 188–220 (ADNEKPTKKKEKKEKPAKVEEKKAVVETTAEPS) is disordered. Positions 200–212 (KEKPAKVEEKKAV) are enriched in basic and acidic residues. The 'HIGH' region signature appears at 277–287 (PEPNGYLHIGH). Residues 278–280 (EPN) and 284–290 (HIGHAKA) each bind ATP. 2 residues coordinate L-glutamine: Asp-310 and Tyr-450. ATP-binding positions include Thr-469, 498–499 (RL), and 506–508 (MSK). Positions 505-509 (VMSKR) match the 'KMSKS' region motif.

Belongs to the class-I aminoacyl-tRNA synthetase family.

It is found in the cytoplasm. The protein resides in the cytosol. It catalyses the reaction tRNA(Gln) + L-glutamine + ATP = L-glutaminyl-tRNA(Gln) + AMP + diphosphate. The protein is Glutamine--tRNA ligase, cytoplasmic of Arabidopsis thaliana (Mouse-ear cress).